We begin with the raw amino-acid sequence, 734 residues long: MASRFPKFSQGLSQDPTTRRIWFGIATAHDFESHDDMTEERLYQKIFASHFGQLAIIFLWTSGNLFHVAWQGNFEAWGQDPLHVRPIAHAIWDPHFGQPAVEAFTRGGASGPVNIAYSGVYQWWYTIGLRTNQDLYNGALFLVILSSISLIAGWLHLQPKWKPKVSWFKNAESRLNHHLSGLFGVSSLAWTGHLVHVAIPESRGEHVRWDNFLTKLPHPEGLGPFFAGQWNIYAQNVDSSNHAFGTSQGAGTAILTFIGGFHPQTQSLWLTDIAHHHLAIAVVFIIAGHMYRTNFGIGHSIKEILETHTPPGGRLGRGHKGLYDTINNSLHFQLGLALASLGVITSLVAQHMYSLPPYAFLAQDFTTQAALYTHHQYIAGFIMTGAFAHGAIFFIRDYNPEQNKDNVLARMLEHKEAIISHLSWASLFLGFHTLGLYVHNDVMLAFGTPEKQILIEPIFAQWIQSAHGKALYGFDVLLSSTNNPAFNAGQSIWLPGWLDAINNNSNSLFLTIGPGDFLVHHAIALGLHTTTLILVKGALDARGSKLMPDKKEFGYSFPCDGPGRGGTCDISAWDAFYLAVFWMLNTIGWVTFYWHWKHITLWQGNAAQFNESSTYLMGWLRDYLWLNSSQLINGYNPFGMNSLSVWAWMFLFGHLVWATGFMFLISWRGYWQELIETLAWAHERTPLANLVRWKDKPVALSIVQARLVGLAHFSVGYIFTYAAFLIASTSGKFG.

Transmembrane regions (helical) follow at residues 46 to 69 (IFASHFGQLAIIFLWTSGNLFHVA), 135 to 158 (LYNGALFLVILSSISLIAGWLHLQ), 175 to 199 (LNHHLSGLFGVSSLAWTGHLVHVAI), 273 to 291 (IAHHHLAIAVVFIIAGHMY), 330 to 353 (LHFQLGLALASLGVITSLVAQHMY), 369 to 395 (AALYTHHQYIAGFIMTGAFAHGAIFFI), 417 to 439 (AIISHLSWASLFLGFHTLGLYVH), and 517 to 535 (FLVHHAIALGLHTTTLILV). [4Fe-4S] cluster contacts are provided by Cys559 and Cys568. Helical transmembrane passes span 575–596 (AFYLAVFWMLNTIGWVTFYWHW) and 643–665 (LSVWAWMFLFGHLVWATGFMFLI). The chlorophyll a site is built by His654, Met662, and Tyr670. Position 671 (Trp671) interacts with phylloquinone. A helical membrane pass occupies residues 707-727 (LVGLAHFSVGYIFTYAAFLIA).

Belongs to the PsaA/PsaB family. The PsaA/B heterodimer binds the P700 chlorophyll special pair and subsequent electron acceptors. PSI consists of a core antenna complex that captures photons, and an electron transfer chain that converts photonic excitation into a charge separation. The eukaryotic PSI reaction center is composed of at least 11 subunits. Requires P700 is a chlorophyll a/chlorophyll a' dimer, A0 is one or more chlorophyll a, A1 is one or both phylloquinones and FX is a shared 4Fe-4S iron-sulfur center. as cofactor.

It localises to the plastid. The protein localises to the chloroplast thylakoid membrane. The enzyme catalyses reduced [plastocyanin] + hnu + oxidized [2Fe-2S]-[ferredoxin] = oxidized [plastocyanin] + reduced [2Fe-2S]-[ferredoxin]. PsaA and PsaB bind P700, the primary electron donor of photosystem I (PSI), as well as the electron acceptors A0, A1 and FX. PSI is a plastocyanin-ferredoxin oxidoreductase, converting photonic excitation into a charge separation, which transfers an electron from the donor P700 chlorophyll pair to the spectroscopically characterized acceptors A0, A1, FX, FA and FB in turn. Oxidized P700 is reduced on the lumenal side of the thylakoid membrane by plastocyanin. This Marchantia polymorpha (Common liverwort) protein is Photosystem I P700 chlorophyll a apoprotein A2.